The sequence spans 360 residues: MFTLLVDFADKISVFNVFRYITFRTGGALITSALIVFIFGPTIINSLRLRQGKGQPIRADGPQTHFKKAGTPTMGGLMILSGIIGSSLLWANLSSIYVWVVLLVTLGFGSIGFYDDYLKVTKQSHLGFSGKARLGLEFIIAGIAAWVIMHNGQAPFSSSLTFPFAKEFIINLGWFFIPFSCFVIVGAGNAVNLTDGLDGLAIVPIMIAAASFGVIAYLSGNAVFAEYLQIHFVPGTGELAVVLGAVIGAGLGFLWFNAPPAAIFMGDTGSLAMGGLIGTVAVATKHEIVLVIVGGLFVVEILSVIIQVGYFKMTGKRVFLMAPIHHHFEKLGWTESQVVIRFWIIAVILALVGLSTLKLR.

The next 10 helical transmembrane spans lie at 27–47, 71–91, 93–113, 134–154, 168–188, 199–219, 239–259, 262–282, 288–308, and 337–357; these read GALI…INSL, TPTM…LLWA, LSSI…SIGF, LGLE…NGQA, FIIN…VGAG, GLAI…AYLS, LAVV…FNAP, AIFM…TVAV, IVLV…IIQV, and QVVI…LSTL.

It belongs to the glycosyltransferase 4 family. MraY subfamily. It depends on Mg(2+) as a cofactor.

The protein resides in the cell inner membrane. It carries out the reaction UDP-N-acetyl-alpha-D-muramoyl-L-alanyl-gamma-D-glutamyl-meso-2,6-diaminopimeloyl-D-alanyl-D-alanine + di-trans,octa-cis-undecaprenyl phosphate = di-trans,octa-cis-undecaprenyl diphospho-N-acetyl-alpha-D-muramoyl-L-alanyl-D-glutamyl-meso-2,6-diaminopimeloyl-D-alanyl-D-alanine + UMP. The protein operates within cell wall biogenesis; peptidoglycan biosynthesis. Catalyzes the initial step of the lipid cycle reactions in the biosynthesis of the cell wall peptidoglycan: transfers peptidoglycan precursor phospho-MurNAc-pentapeptide from UDP-MurNAc-pentapeptide onto the lipid carrier undecaprenyl phosphate, yielding undecaprenyl-pyrophosphoryl-MurNAc-pentapeptide, known as lipid I. The protein is Phospho-N-acetylmuramoyl-pentapeptide-transferase of Mesorhizobium japonicum (strain LMG 29417 / CECT 9101 / MAFF 303099) (Mesorhizobium loti (strain MAFF 303099)).